Consider the following 447-residue polypeptide: Methylenetetrahydrofolate--tRNA-(uracil-5-)-methyltransferase TrmFO (447 aa).

13–18 (GAGLAG) is an FAD binding site.

Belongs to the MnmG family. TrmFO subfamily. Requires FAD as cofactor.

The protein localises to the cytoplasm. It catalyses the reaction uridine(54) in tRNA + (6R)-5,10-methylene-5,6,7,8-tetrahydrofolate + NADH + H(+) = 5-methyluridine(54) in tRNA + (6S)-5,6,7,8-tetrahydrofolate + NAD(+). The enzyme catalyses uridine(54) in tRNA + (6R)-5,10-methylene-5,6,7,8-tetrahydrofolate + NADPH + H(+) = 5-methyluridine(54) in tRNA + (6S)-5,6,7,8-tetrahydrofolate + NADP(+). Functionally, catalyzes the folate-dependent formation of 5-methyl-uridine at position 54 (M-5-U54) in all tRNAs. This is Methylenetetrahydrofolate--tRNA-(uracil-5-)-methyltransferase TrmFO from Streptococcus thermophilus (strain CNRZ 1066).